Consider the following 645-residue polypeptide: DNA ligase (645 aa).

NAD(+) contacts are provided by residues 30-34 (DDEYD), 79-80 (SM), and Glu-106. Residue Lys-108 is the N6-AMP-lysine intermediate of the active site. Positions 129, 163, and 302 each coordinate NAD(+). Positions 396, 399, 412, and 417 each coordinate Zn(2+). A BRCT domain is found at 570–645 (LKTNIFSGKT…IDESEYESLK (76 aa)).

Belongs to the NAD-dependent DNA ligase family. LigA subfamily. Mg(2+) serves as cofactor. Requires Mn(2+) as cofactor.

The catalysed reaction is NAD(+) + (deoxyribonucleotide)n-3'-hydroxyl + 5'-phospho-(deoxyribonucleotide)m = (deoxyribonucleotide)n+m + AMP + beta-nicotinamide D-nucleotide.. In terms of biological role, DNA ligase that catalyzes the formation of phosphodiester linkages between 5'-phosphoryl and 3'-hydroxyl groups in double-stranded DNA using NAD as a coenzyme and as the energy source for the reaction. It is essential for DNA replication and repair of damaged DNA. The sequence is that of DNA ligase from Campylobacter fetus subsp. fetus (strain 82-40).